Consider the following 146-residue polypeptide: Hemoglobin subunit delta (146 aa).

The Globin domain occupies 2-146 (HLTGEEKSAV…VATALAHKYH (145 aa)). Positions 63 and 92 each coordinate heme b.

It belongs to the globin family. Heterotetramer of two delta chains and two alpha chains. As to expression, red blood cells.

The protein is Hemoglobin subunit delta (HBD) of Ateles fusciceps (Brown-headed spider monkey).